Consider the following 138-residue polypeptide: Membrane protein P8A7 (138 aa).

4 helical membrane passes run 12–30 (ILVILAGCFITACGIYLFV), 32–56 (GLFHSIIGFVLGIYYLLAGVCIVLL), 71–90 (YTYWFGKGALISLIGLLILG), and 93–118 (GFFLAAGIIVIAVGIVCMIFHFLLGC).

It localises to the membrane. The chain is Membrane protein P8A7 (pmpA) from Dictyostelium discoideum (Social amoeba).